A 525-amino-acid polypeptide reads, in one-letter code: GMP synthase [glutamine-hydrolyzing] (525 aa).

The Glutamine amidotransferase type-1 domain maps to Arg-9–Leu-207. Residue Cys-86 is the Nucleophile of the active site. Residues His-181 and Glu-183 contribute to the active site. The region spanning Trp-208 to Arg-400 is the GMPS ATP-PPase domain. Ser-235–Ser-241 contributes to the ATP binding site.

As to quaternary structure, homodimer.

The catalysed reaction is XMP + L-glutamine + ATP + H2O = GMP + L-glutamate + AMP + diphosphate + 2 H(+). The protein operates within purine metabolism; GMP biosynthesis; GMP from XMP (L-Gln route): step 1/1. Functionally, catalyzes the synthesis of GMP from XMP. The protein is GMP synthase [glutamine-hydrolyzing] of Pseudomonas fluorescens (strain SBW25).